Reading from the N-terminus, the 379-residue chain is Gap junction alpha-1 protein (379 aa).

Over Gly-2–Lys-23 the chain is Cytoplasmic. Residues Val-24–Ala-44 traverse the membrane as a helical segment. At Trp-45 to Arg-76 the chain is on the extracellular side. 2 disulfide bridges follow: Cys-54–Cys-192 and Cys-187–Cys-198. A helical transmembrane segment spans residues Phe-77–Phe-97. The Cytoplasmic portion of the chain corresponds to Tyr-98–Ser-163. Residues Val-164–Ile-184 traverse the membrane as a helical segment. Topologically, residues Tyr-185 to Thr-207 are extracellular. The helical transmembrane segment at Ile-208–Leu-228 threads the bilayer. At Phe-229–Ile-379 the chain is on the cytoplasmic side. Positions Ser-322–Ile-379 are disordered. Residues Arg-359 to Arg-371 show a composition bias toward low complexity.

It belongs to the connexin family. Alpha-type (group II) subfamily. A connexon is composed of a hexamer of connexins. Interacts with TMEM65. Expressed in most tissues. Highest levels found in eye and brain.

It is found in the cell membrane. The protein resides in the cell junction. The protein localises to the gap junction. One gap junction consists of a cluster of closely packed pairs of transmembrane channels, the connexons, through which materials of low MW diffuse from one cell to a neighboring cell. Plays an essential role in gap junction communication in the ventricles. This chain is Gap junction alpha-1 protein (gja1), found in Xenopus laevis (African clawed frog).